A 150-amino-acid chain; its full sequence is Macrodomain Ter protein (150 aa).

This sequence belongs to the MatP family. In terms of assembly, homodimer.

It localises to the cytoplasm. Its function is as follows. Required for spatial organization of the terminus region of the chromosome (Ter macrodomain) during the cell cycle. Prevents early segregation of duplicated Ter macrodomains during cell division. Binds specifically to matS, which is a 13 bp signature motif repeated within the Ter macrodomain. This Shigella dysenteriae serotype 1 (strain Sd197) protein is Macrodomain Ter protein.